The following is a 290-amino-acid chain: Arginine N-acetyltransferase avaD (290 aa).

157 to 163 contacts acetyl-CoA; sequence NQAHFEA.

Belongs to the acetyltransferase family. GCN5 subfamily.

The protein operates within secondary metabolite metabolism. Functionally, arginine N-acetyltransferase; part of the cluster that mediates the biosynthesis of a highly modified cyclo-arginine-tryptophan dipeptide (cRW). Within the pathway, avaD catalyzes the N-acetylation of the guanidine group. The first step of the pathway is perfornmed by the arginine-containing cyclodipeptide synthase (RCPDS) avaA that acts as the scaffold-generating enzyme and is responsible for formation of the cyclo-Arg-Trp (cRW) diketopiperazine. AvaB then acts as a multifunctional flavoenzyme that is responsible for generating the cyclo-Arg-formylkynurenine DKP, which can be deformylated by avaC. AvaB then further catalyzes an additional N-oxidation followed by cyclization and dehydration. The next step is an N-acetylation of the guanidine group catalyzed by the arginine N-acetyltransferase avaD. The roles of the additional enzymes identified within the ava cluster still have to be determined. This is Arginine N-acetyltransferase avaD from Aspergillus versicolor.